The following is a 323-amino-acid chain: Methionyl-tRNA formyltransferase (323 aa).

S113–P116 contacts (6S)-5,6,7,8-tetrahydrofolate.

This sequence belongs to the Fmt family.

The catalysed reaction is L-methionyl-tRNA(fMet) + (6R)-10-formyltetrahydrofolate = N-formyl-L-methionyl-tRNA(fMet) + (6S)-5,6,7,8-tetrahydrofolate + H(+). Attaches a formyl group to the free amino group of methionyl-tRNA(fMet). The formyl group appears to play a dual role in the initiator identity of N-formylmethionyl-tRNA by promoting its recognition by IF2 and preventing the misappropriation of this tRNA by the elongation apparatus. The sequence is that of Methionyl-tRNA formyltransferase from Porphyromonas gingivalis (strain ATCC BAA-308 / W83).